A 396-amino-acid polypeptide reads, in one-letter code: Acetate kinase (396 aa).

N8 is a Mg(2+) binding site. K15 is an ATP binding site. R90 lines the substrate pocket. D147 (proton donor/acceptor) is an active-site residue. Residues 207 to 211 (HLGSG), 283 to 285 (DMR), and 330 to 334 (GIGEN) contribute to the ATP site. A Mg(2+)-binding site is contributed by E384.

Belongs to the acetokinase family. Homodimer. The cofactor is Mg(2+). Requires Mn(2+) as cofactor.

Its subcellular location is the cytoplasm. The catalysed reaction is acetate + ATP = acetyl phosphate + ADP. It participates in metabolic intermediate biosynthesis; acetyl-CoA biosynthesis; acetyl-CoA from acetate: step 1/2. Its function is as follows. Catalyzes the formation of acetyl phosphate from acetate and ATP. Can also catalyze the reverse reaction. In Lacticaseibacillus paracasei (strain ATCC 334 / BCRC 17002 / CCUG 31169 / CIP 107868 / KCTC 3260 / NRRL B-441) (Lactobacillus paracasei), this protein is Acetate kinase.